A 428-amino-acid polypeptide reads, in one-letter code: Divergent protein kinase domain 1A (428 aa).

At 1–27 (MARGLFSRAWLSKTHHFQARLSYIRVK) the chain is on the cytoplasmic side. A helical membrane pass occupies residues 28–48 (YLFLTWLAVFVSSWVVYVQYS). The Lumenal portion of the chain corresponds to 49–428 (TYTELCRGRE…WKQISHTTDS (380 aa)).

Belongs to the DIPK family. Post-translationally, among the many cysteines in the lumenal domain, most are probably involved in disulfide bonds.

It is found in the endoplasmic reticulum membrane. This is Divergent protein kinase domain 1A (dipk1a) from Danio rerio (Zebrafish).